A 376-amino-acid chain; its full sequence is Hydroxylysine kinase (376 aa).

Residue D229 is the Proton acceptor of the active site.

This sequence belongs to the aminoglycoside phosphotransferase family.

The protein resides in the cytoplasm. The catalysed reaction is (5R)-5-hydroxy-L-lysine + GTP = (5R)-5-phosphooxy-L-lysine + GDP + H(+). Catalyzes the GTP-dependent phosphorylation of 5-hydroxy-L-lysine. The chain is Hydroxylysine kinase (Hykk) from Mus musculus (Mouse).